The sequence spans 90 residues: Progonadoliberin-3 (90 aa).

The first 23 residues, Met-1 to Ser-23, serve as a signal peptide directing secretion. Gln-24 bears the Pyrrolidone carboxylic acid mark. Gly-33 bears the Glycine amide mark.

It belongs to the GnRH family.

The protein resides in the secreted. Its function is as follows. Stimulates the secretion of gonadotropins. The protein is Progonadoliberin-3 (gnrh3) of Pagrus major (Red sea bream).